A 740-amino-acid chain; its full sequence is ATP-dependent RNA helicase DDX1 (740 aa).

The interval 1–295 (MAAFSEMGVM…APKALIVEPS (295 aa)) is necessary for interaction with HNRNPK. Residues 1–448 (MAAFSEMGVM…DTVHHVVVPV (448 aa)) form an interaction with dsRNA region. Residues 1 to 525 (MAAFSEMGVM…KIDCDNLEQY (525 aa)) are necessary for interaction with RELA. The region spanning 2–428 (AAFSEMGVMP…SEKIMHFPTW (427 aa)) is the Helicase ATP-binding domain. An ATP-binding site is contributed by 46–53 (AETGSGKT). The B30.2/SPRY domain occupies 70 to 247 (DQQEGKKGKA…LKFNFGEEEF (178 aa)). K239 and K268 each carry N6-acetyllysine. At K281 the chain carries N6-acetyllysine; alternate. K281 participates in a covalent cross-link: Glycyl lysine isopeptide (Lys-Gly) (interchain with G-Cter in SUMO2); alternate. The DEAD box signature appears at 370–373 (DEAD). At S481 the chain carries Phosphoserine. One can recognise a Helicase C-terminal domain in the interval 493–681 (KGEYAVRAIK…QVEPDIKVPV (189 aa)). Positions 525 to 740 (YFMQQGGGPD…YLPNQLFRTF (216 aa)) are necessary for interaction with HNRNPK.

The protein belongs to the DEAD box helicase family. DDX1 subfamily. In terms of assembly, found in a multi-helicase-TICAM1 complex at least composed of DHX36, DDX1, DDX21 and TICAM1; this complex exists in resting cells with or without poly(I:C) RNA ligand stimulation. Interacts with DHX36. Interacts (via B30.2/SPRY domain) with DDX21 (via N-terminus); this interaction serves as bridges to TICAM1. Interacts with FAM98A (via N- and C-terminus). Interacts with PHF5A (via C-terminus). Interacts with MBNL1. Interacts with CSTF2. Interacts with HNRNPK. Interacts with ATM. Interacts with RELA (via C-terminus). Component of the tRNA-splicing ligase complex. Interacts with PQBP1. Interacts with ERCC6. In terms of processing, phosphorylated by ATM kinase; phosphorylation is increased in response to ionizing radiation (IR).

Its subcellular location is the nucleus. The protein localises to the cytoplasm. It localises to the cytoplasmic granule. It is found in the cytosol. The protein resides in the mitochondrion. The enzyme catalyses ATP + H2O = ADP + phosphate + H(+). Acts as an ATP-dependent RNA helicase, able to unwind both RNA-RNA and RNA-DNA duplexes. Possesses 5' single-stranded RNA overhang nuclease activity. Possesses ATPase activity on various RNA, but not DNA polynucleotides. May play a role in RNA clearance at DNA double-strand breaks (DSBs), thereby facilitating the template-guided repair of transcriptionally active regions of the genome. Together with RELA, acts as a coactivator to enhance NF-kappa-B-mediated transcriptional activation. Acts as a positive transcriptional regulator of cyclin CCND2 expression. Binds to the cyclin CCND2 promoter region. Associates with chromatin at the NF-kappa-B promoter region via association with RELA. Binds to poly(A) RNA. May be involved in 3'-end cleavage and polyadenylation of pre-mRNAs. Component of the tRNA-splicing ligase complex required to facilitate the enzymatic turnover of catalytic subunit RTCB: together with archease (ZBTB8OS), acts by facilitating the guanylylation of RTCB, a key intermediate step in tRNA ligation. Component of a multi-helicase-TICAM1 complex that acts as a cytoplasmic sensor of viral double-stranded RNA (dsRNA) and plays a role in the activation of a cascade of antiviral responses including the induction of pro-inflammatory cytokines via the adapter molecule TICAM1. Specifically binds (via helicase ATP-binding domain) on both short and long poly(I:C) dsRNA. This chain is ATP-dependent RNA helicase DDX1 (DDX1), found in Bos taurus (Bovine).